Consider the following 90-residue polypeptide: UPF0297 protein BH1268 (90 aa).

Belongs to the UPF0297 family.

This chain is UPF0297 protein BH1268, found in Halalkalibacterium halodurans (strain ATCC BAA-125 / DSM 18197 / FERM 7344 / JCM 9153 / C-125) (Bacillus halodurans).